The following is a 656-amino-acid chain: Nuclear pore complex protein Nup85 (656 aa).

Met1 carries the post-translational modification N-acetylmethionine. N6-acetyllysine is present on Lys92. Ser223 is subject to Phosphoserine.

It belongs to the nucleoporin Nup85 family. As to quaternary structure, component of the nuclear pore complex (NPC). Component of the NPC Nup107-160 subcomplex, consisting of at least NUP107, NUP98/Nup96, NUP160, NUP133, NUP85, NUP37, NUP43 and SEC13. Interacts with NUP160, NUP133 and SEC13. Interacts with NUP37, NUP107 and NUP43. Interacts with CCR2.

It is found in the nucleus. The protein localises to the nuclear pore complex. The protein resides in the chromosome. It localises to the centromere. Its subcellular location is the kinetochore. It is found in the cytoplasm. The protein localises to the cytoskeleton. The protein resides in the spindle. It localises to the nucleus membrane. Essential component of the nuclear pore complex (NPC) that seems to be required for NPC assembly and maintenance. As part of the NPC Nup107-160 subcomplex plays a role in RNA export and in tethering NUP96/Nup98 and NUP153 to the nucleus. The Nup107-160 complex seems to be required for spindle assembly during mitosis. NUP85 is required for membrane clustering of CCL2-activated CCR2. Seems to be involved in CCR2-mediated chemotaxis of monocytes and may link activated CCR2 to the phosphatidyl-inositol 3-kinase-Rac-lammellipodium protrusion cascade. Involved in nephrogenesis. This Homo sapiens (Human) protein is Nuclear pore complex protein Nup85 (NUP85).